The primary structure comprises 115 residues: Large ribosomal subunit protein bL20 (115 aa).

This sequence belongs to the bacterial ribosomal protein bL20 family.

Binds directly to 23S ribosomal RNA and is necessary for the in vitro assembly process of the 50S ribosomal subunit. It is not involved in the protein synthesizing functions of that subunit. This Chlorobium phaeovibrioides (strain DSM 265 / 1930) (Prosthecochloris vibrioformis (strain DSM 265)) protein is Large ribosomal subunit protein bL20.